Consider the following 721-residue polypeptide: DNA ligase (721 aa).

The span at 1 to 19 (MTAKKQGAQASASAPSGDS) shows a compositional bias: low complexity. The tract at residues 1 to 23 (MTAKKQGAQASASAPSGDSPAER) is disordered. NAD(+) contacts are provided by residues 48 to 52 (DADYD), 97 to 98 (SL), and glutamate 162. Catalysis depends on lysine 164, which acts as the N6-AMP-lysine intermediate. Arginine 185, glutamate 221, lysine 338, and lysine 362 together coordinate NAD(+). Positions 456, 459, 474, and 480 each coordinate Zn(2+). Residues 639–721 (RAPLPLAGKT…LKLLAEVGAA (83 aa)) enclose the BRCT domain.

The protein belongs to the NAD-dependent DNA ligase family. LigA subfamily. Mg(2+) serves as cofactor. Requires Mn(2+) as cofactor.

The enzyme catalyses NAD(+) + (deoxyribonucleotide)n-3'-hydroxyl + 5'-phospho-(deoxyribonucleotide)m = (deoxyribonucleotide)n+m + AMP + beta-nicotinamide D-nucleotide.. In terms of biological role, DNA ligase that catalyzes the formation of phosphodiester linkages between 5'-phosphoryl and 3'-hydroxyl groups in double-stranded DNA using NAD as a coenzyme and as the energy source for the reaction. It is essential for DNA replication and repair of damaged DNA. The chain is DNA ligase from Cupriavidus metallidurans (strain ATCC 43123 / DSM 2839 / NBRC 102507 / CH34) (Ralstonia metallidurans).